The sequence spans 97 residues: Small ribosomal subunit protein bS6 (97 aa).

Belongs to the bacterial ribosomal protein bS6 family.

In terms of biological role, binds together with bS18 to 16S ribosomal RNA. This is Small ribosomal subunit protein bS6 from Bifidobacterium longum (strain NCC 2705).